We begin with the raw amino-acid sequence, 1696 residues long: Proprotein convertase subtilisin/kexin type 5 (1696 aa).

Positions 1-25 are cleaved as a signal peptide; it reads MPPAIVILALFTAALCAVNLRTVAA. Residues 26–110 constitute a propeptide that is removed on maturation; it reads DGPRIYRNEW…QQVVKRRVKR (85 aa). The interval 111–488 is catalytic; sequence RVKRVYSMYP…GLMDAGKMVE (378 aa). Topologically, residues 111–1618 are extracellular; that stretch reads RVKRVYSMYP…ADSIPTNVAY (1508 aa). One can recognise a Peptidase S8 domain in the interval 167–487; it reads QWSDMNVEAA…FGLMDAGKMV (321 aa). Active-site charge relay system residues include Asp192 and His233. N-linked (GlcNAc...) asparagine glycosylation is present at Asn246. Ser407 (charge relay system) is an active-site residue. Positions 495–638 constitute a P/Homo B domain; that stretch reads RVPEQHVCEE…KLILYGTAEH (144 aa). The N-linked (GlcNAc...) asparagine glycan is linked to Asn529. Positions 643 to 657 are enriched in basic and acidic residues; that stretch reads RDEESRPHTPQTREE. The disordered stretch occupies residues 643 to 666; that stretch reads RDEESRPHTPQTREEPTDEEECED. The tract at residues 664–1649 is CRM (Cys-rich motif); that stretch reads CEDGDYYDRS…LQARSNGRLC (986 aa). Residue Asn885 is glycosylated (N-linked (GlcNAc...) asparagine). A helical membrane pass occupies residues 1619–1639; sequence IAVATFICVVIVVLFFVVFGM. At 1640–1696 the chain is on the cytoplasmic side; sequence LQARSNGRLCWAHKYQQVPTTRYEKMNDHVNILSQEDFYNEDSLSEDEIHSIDSTRH.

It belongs to the peptidase S8 family.

It localises to the secreted. Its subcellular location is the cell membrane. Serine endoprotease that processes various proproteins by cleavage at paired basic amino acids, recognizing the RXXX[KR]R consensus motif. Likely functions in the constitutive and regulated secretory pathways. In Branchiostoma californiense (California lancelet), this protein is Proprotein convertase subtilisin/kexin type 5 (PC6).